The chain runs to 97 residues: Large ribosomal subunit protein uL23 (97 aa).

It belongs to the universal ribosomal protein uL23 family. As to quaternary structure, part of the 50S ribosomal subunit. Contacts protein L29, and trigger factor when it is bound to the ribosome.

In terms of biological role, one of the early assembly proteins it binds 23S rRNA. One of the proteins that surrounds the polypeptide exit tunnel on the outside of the ribosome. Forms the main docking site for trigger factor binding to the ribosome. This Sinorhizobium medicae (strain WSM419) (Ensifer medicae) protein is Large ribosomal subunit protein uL23.